A 648-amino-acid polypeptide reads, in one-letter code: DNA ligase (648 aa).

Residues 30–34 and 79–80 each bind NAD(+); these read DEEYD and SQ. The active-site N6-AMP-lysine intermediate is the Lys110. NAD(+) is bound by residues Arg131, Glu165, Lys280, and Lys304. Zn(2+) contacts are provided by Cys398, Cys401, Cys414, and Cys419. Residues 573–648 enclose the BRCT domain; sequence VSENPFKNKT…LTEEEMNSLF (76 aa).

The protein belongs to the NAD-dependent DNA ligase family. LigA subfamily. Mg(2+) serves as cofactor. The cofactor is Mn(2+).

It carries out the reaction NAD(+) + (deoxyribonucleotide)n-3'-hydroxyl + 5'-phospho-(deoxyribonucleotide)m = (deoxyribonucleotide)n+m + AMP + beta-nicotinamide D-nucleotide.. Functionally, DNA ligase that catalyzes the formation of phosphodiester linkages between 5'-phosphoryl and 3'-hydroxyl groups in double-stranded DNA using NAD as a coenzyme and as the energy source for the reaction. It is essential for DNA replication and repair of damaged DNA. This chain is DNA ligase, found in Aliarcobacter butzleri (strain RM4018) (Arcobacter butzleri).